A 239-amino-acid polypeptide reads, in one-letter code: Small ribosomal subunit protein uS2 (239 aa).

Belongs to the universal ribosomal protein uS2 family.

This chain is Small ribosomal subunit protein uS2, found in Francisella tularensis subsp. tularensis (strain WY96-3418).